The following is a 263-amino-acid chain: MYKTKIFYKSGLFLHGRRYIYRKPKETNYWKNYIIVPLYINDKEVGIDKTISEPEYILLDIILYGPLKIKLSEYFNLNNKIIDRTTTYKKLLEKNTIYGINFNFTFPILLNFKDSENKYQLKEYLDFNNILQIYLIENKKYIYRELRSKFDWDEYNVLKIRLYVNHKSVIFIKDKYLEEPTELEYIVLDLFLLGPLEKEYSENYKIIYLINERNKRYKDMYDMGEIYGINIRFDKLDYFKFLNSEYSTEERIYEKILFIYIIT.

The protein belongs to the A.longa ORF167/ORF288 family.

It localises to the plastid. This is an uncharacterized protein from Euglena longa (Euglenophycean alga).